A 64-amino-acid chain; its full sequence is Disintegrin lebein-1-beta (64 aa).

In terms of domain architecture, Disintegrin spans N1–D64. Cystine bridges form between C6–C29, C20–C26, C25–C50, and C38–C57. Residues R42–D44 carry the Cell attachment site motif.

Belongs to the disintegrin family. Dimeric disintegrin subfamily. Heterodimer with subunit alpha; disulfide-linked. As to expression, expressed by the venom gland.

Its subcellular location is the secreted. In terms of biological role, strongly inhibits ADP-induced platelet aggregation on human platelet-rich plasma. Also avidly binds to the laminin-binding beta-1 integrins (alpha-3/beta-1, alpha-6/beta-1, and alpha-7/beta-1) in an RGD-independent manner. The protein is Disintegrin lebein-1-beta of Macrovipera lebetinus (Levantine viper).